The sequence spans 153 residues: Large ribosomal subunit protein uL30 (153 aa).

The protein belongs to the universal ribosomal protein uL30 family. Part of the 50S ribosomal subunit.

The chain is Large ribosomal subunit protein uL30 from Methanosarcina mazei (strain ATCC BAA-159 / DSM 3647 / Goe1 / Go1 / JCM 11833 / OCM 88) (Methanosarcina frisia).